We begin with the raw amino-acid sequence, 407 residues long: Argininosuccinate synthase (407 aa).

Residues 13–21 (AYSGGLDTS) and A40 each bind ATP. The L-citrulline site is built by Y91 and S96. G121 is an ATP binding site. L-aspartate contacts are provided by T123, N127, and D128. N127 serves as a coordination point for L-citrulline. R131, S182, S191, E267, and Y279 together coordinate L-citrulline.

The protein belongs to the argininosuccinate synthase family. Type 1 subfamily. Homotetramer.

The protein localises to the cytoplasm. The enzyme catalyses L-citrulline + L-aspartate + ATP = 2-(N(omega)-L-arginino)succinate + AMP + diphosphate + H(+). It participates in amino-acid biosynthesis; L-arginine biosynthesis; L-arginine from L-ornithine and carbamoyl phosphate: step 2/3. The chain is Argininosuccinate synthase from Mesorhizobium japonicum (strain LMG 29417 / CECT 9101 / MAFF 303099) (Mesorhizobium loti (strain MAFF 303099)).